The primary structure comprises 680 residues: DNA-directed RNA polymerase subunit beta' (680 aa).

Zn(2+) is bound by residues cysteine 69, cysteine 71, cysteine 87, and cysteine 90. Mg(2+) is bound by residues aspartate 489, aspartate 491, and aspartate 493.

The protein belongs to the RNA polymerase beta' chain family. RpoC1 subfamily. In plastids the minimal PEP RNA polymerase catalytic core is composed of four subunits: alpha, beta, beta', and beta''. When a (nuclear-encoded) sigma factor is associated with the core the holoenzyme is formed, which can initiate transcription. The cofactor is Mg(2+). Requires Zn(2+) as cofactor.

It localises to the plastid. Its subcellular location is the chloroplast. It carries out the reaction RNA(n) + a ribonucleoside 5'-triphosphate = RNA(n+1) + diphosphate. Its function is as follows. DNA-dependent RNA polymerase catalyzes the transcription of DNA into RNA using the four ribonucleoside triphosphates as substrates. The chain is DNA-directed RNA polymerase subunit beta' from Capsella bursa-pastoris (Shepherd's purse).